Consider the following 837-residue polypeptide: Protein ROD1 (837 aa).

Phosphoserine is present on residues S138 and S141. K401 participates in a covalent cross-link: Glycyl lysine isopeptide (Lys-Gly) (interchain with G-Cter in ubiquitin). Residue S436 is modified to Phosphoserine. A PY-motif motif is present at residues 487–490 (PPNY). At S536 the chain carries Phosphoserine. Positions 656-659 (PPAY) match the PY-motif motif. 2 disordered regions span residues 675–726 (ERPQ…SVSL) and 763–837 (SFTS…RDRS). Residues 685–703 (TSSLLPLPGSSKSSNNLKR) show a composition bias toward low complexity. Residues 716-726 (PRNNSGSSVSL) are compositionally biased toward polar residues. Phosphoserine is present on residues S720 and S725. Low complexity predominate over residues 763-773 (SFTSNSSSKNN). Basic and acidic residues predominate over residues 774–792 (SHFDKTDSTSDANKPREEE). Low complexity predominate over residues 805–815 (SSSVRSNNSNS).

It belongs to the arrestin family. Interacts with RSP5 via its 2 PY-motifs.

The protein resides in the membrane. Functionally, mediates resistance to o-dinitrobenzene, calcium and zinc. The protein is Protein ROD1 (ROD1) of Saccharomyces cerevisiae (strain ATCC 204508 / S288c) (Baker's yeast).